The sequence spans 908 residues: Metabotropic glutamate receptor 8 (908 aa).

The first 33 residues, 1-33 (MVCEGKRLASCPCFFLLTAKFYWILTMMQRTHS), serve as a signal peptide directing secretion. The Extracellular segment spans residues 34 to 583 (QEYAHSIRVD…IIKLEWHSPW (550 aa)). Cysteines 64 and 106 form a disulfide. The N-linked (GlcNAc...) asparagine glycan is linked to N95. Residues S156, 177 to 179 (AST), and Y227 each bind L-glutamate. 7 disulfides stabilise this stretch: C246/C534, C369/C384, C424/C431, C516/C535, C520/C538, C541/C553, and C556/C569. The N-linked (GlcNAc...) asparagine glycan is linked to N298. D309 serves as a coordination point for L-glutamate. K401 lines the L-glutamate pocket. N452 and N480 each carry an N-linked (GlcNAc...) asparagine glycan. N-linked (GlcNAc...) asparagine glycosylation occurs at N565. A helical transmembrane segment spans residues 584–608 (AVVPVFIAILGIIATTFVIVTFVRY). The Cytoplasmic segment spans residues 609–620 (NDTPIVRASGRE). A helical membrane pass occupies residues 621–641 (LSYVLLTGIFLCYSITFLMIA). Over 642-647 (APDTII) the chain is Extracellular. The helical transmembrane segment at 648–668 (CSFRRIFLGLGMCFSYAALLT) threads the bilayer. The Cytoplasmic segment spans residues 669-695 (KTNRIHRIFEQGKKSVTAPKFISPASQ). A helical membrane pass occupies residues 696–716 (LVITFSLISVQLLGVFVWFVV). Over 717–746 (DPPHTIIDYGEQRTLDPENARGVLKCDISD) the chain is Extracellular. Residues 747-768 (LSLICSLGYSILLMVTCTVYAI) traverse the membrane as a helical segment. Residues 769 to 781 (KTRGVPETFNEAK) lie on the Cytoplasmic side of the membrane. Residues 782 to 803 (PIGFTMYTTCIIWLAFIPIFFG) traverse the membrane as a helical segment. Over 804–818 (TAQSAEKMYIQTTTL) the chain is Extracellular. A helical membrane pass occupies residues 819-843 (TVSMSLSASVSLGMLYMPKVYIIIF). Over 844–908 (HPEQNVQKRK…TYISYSNHSI (65 aa)) the chain is Cytoplasmic. A Glycyl lysine isopeptide (Lys-Gly) (interchain with G-Cter in SUMO1) cross-link involves residue K882.

Belongs to the G-protein coupled receptor 3 family. As to quaternary structure, interacts with PICK1. In terms of tissue distribution, prominent expression in olfactory bulb, pontine gray, lateral reticular nucleus of the thalamus, and piriform cortex. Less abundant expression incerebral cortex, hippocampus, cerebellum, and mammillary body.

It is found in the cell membrane. In terms of biological role, G-protein coupled receptor for glutamate. Ligand binding causes a conformation change that triggers signaling via guanine nucleotide-binding proteins (G proteins) and modulates the activity of down-stream effectors. Signaling inhibits adenylate cyclase activity. The protein is Metabotropic glutamate receptor 8 (Grm8) of Rattus norvegicus (Rat).